The chain runs to 204 residues: dITP/XTP pyrophosphatase (204 aa).

8-13 contacts substrate; it reads TKNAGK. The Proton acceptor role is filled by D70. D70 contributes to the Mg(2+) binding site. Substrate is bound by residues S71, 153–156, K176, and 181–182; these read FGYD and HR.

It belongs to the HAM1 NTPase family. Homodimer. Mg(2+) serves as cofactor.

The enzyme catalyses XTP + H2O = XMP + diphosphate + H(+). It catalyses the reaction dITP + H2O = dIMP + diphosphate + H(+). The catalysed reaction is ITP + H2O = IMP + diphosphate + H(+). Functionally, pyrophosphatase that catalyzes the hydrolysis of nucleoside triphosphates to their monophosphate derivatives, with a high preference for the non-canonical purine nucleotides XTP (xanthosine triphosphate), dITP (deoxyinosine triphosphate) and ITP. Seems to function as a house-cleaning enzyme that removes non-canonical purine nucleotides from the nucleotide pool, thus preventing their incorporation into DNA/RNA and avoiding chromosomal lesions. The sequence is that of dITP/XTP pyrophosphatase from Geobacillus kaustophilus (strain HTA426).